The sequence spans 410 residues: LL-diaminopimelate aminotransferase (410 aa).

Substrate-binding residues include Tyr-15 and Gly-42. Residues Tyr-72, 108–109, Tyr-132, Asn-187, Tyr-218, and 246–248 each bind pyridoxal 5'-phosphate; these read AK and SFS. Residues Lys-109, Tyr-132, and Asn-187 each coordinate substrate. Lys-249 bears the N6-(pyridoxal phosphate)lysine mark. Pyridoxal 5'-phosphate contacts are provided by Arg-257 and Asn-292. Substrate is bound by residues Asn-292 and Arg-388.

Belongs to the class-I pyridoxal-phosphate-dependent aminotransferase family. LL-diaminopimelate aminotransferase subfamily. Homodimer. Pyridoxal 5'-phosphate serves as cofactor.

It catalyses the reaction (2S,6S)-2,6-diaminopimelate + 2-oxoglutarate = (S)-2,3,4,5-tetrahydrodipicolinate + L-glutamate + H2O + H(+). It functions in the pathway amino-acid biosynthesis; L-lysine biosynthesis via DAP pathway; LL-2,6-diaminopimelate from (S)-tetrahydrodipicolinate (aminotransferase route): step 1/1. Functionally, involved in the synthesis of meso-diaminopimelate (m-DAP or DL-DAP), required for both lysine and peptidoglycan biosynthesis. Catalyzes the direct conversion of tetrahydrodipicolinate to LL-diaminopimelate. Can also use m-DAP instead of LL-DAP as the amino-group donor. This Acetivibrio thermocellus (strain ATCC 27405 / DSM 1237 / JCM 9322 / NBRC 103400 / NCIMB 10682 / NRRL B-4536 / VPI 7372) (Clostridium thermocellum) protein is LL-diaminopimelate aminotransferase.